The primary structure comprises 228 residues: 7-cyano-7-deazaguanine synthase (228 aa).

Residue 7 to 17 (LSGGMDSLVTT) coordinates ATP. Zn(2+)-binding residues include Cys187, Cys195, Cys198, and Cys201.

This sequence belongs to the QueC family. Zn(2+) serves as cofactor.

It carries out the reaction 7-carboxy-7-deazaguanine + NH4(+) + ATP = 7-cyano-7-deazaguanine + ADP + phosphate + H2O + H(+). Its pathway is purine metabolism; 7-cyano-7-deazaguanine biosynthesis. Catalyzes the ATP-dependent conversion of 7-carboxy-7-deazaguanine (CDG) to 7-cyano-7-deazaguanine (preQ(0)). The protein is 7-cyano-7-deazaguanine synthase of Chlorobium chlorochromatii (strain CaD3).